The following is a 235-amino-acid chain: Chalcone--flavanone isomerase 1 (235 aa).

Residues T50 and S192 each coordinate substrate.

Belongs to the chalcone isomerase family.

The catalysed reaction is a chalcone = a flavanone.. Its pathway is secondary metabolite biosynthesis; flavonoid biosynthesis. In terms of biological role, catalyzes the intramolecular cyclization of bicyclic chalcones into tricyclic (S)-flavanones. Responsible for the isomerization of 4,2',4',6'-tetrahydroxychalcone (also termed chalcone) into naringenin. This Chrysanthemum morifolium (Florist's daisy) protein is Chalcone--flavanone isomerase 1 (CHI1).